A 360-amino-acid chain; its full sequence is Photosystem II protein D1 (360 aa).

The next 3 membrane-spanning stretches (helical) occupy residues 30–47, 119–134, and 143–157; these read YVGW…AAAI, HFLI…QWEL, and WICV…AAFA. His-119 serves as a coordination point for chlorophyll a. Residue Trp-127 participates in pheophytin a binding. [CaMn4O5] cluster is bound by residues Asp-171 and Glu-190. A helical transmembrane segment spans residues 198–219; sequence FHMAGVAGMFGGSLFSAMHGSL. Residue His-199 coordinates chlorophyll a. A quinone is bound by residues His-216 and 265–266; that span reads SF. His-216 provides a ligand contact to Fe cation. Residue His-273 participates in Fe cation binding. The helical transmembrane segment at 275–289 threads the bilayer; sequence FLAIFPVVCVWLTSM. Residues His-333, Glu-334, Asp-343, and Ala-345 each coordinate [CaMn4O5] cluster. Residues 346-360 constitute a propeptide that is removed on maturation; it reads AAESTSVALVAPSIG.

The protein belongs to the reaction center PufL/M/PsbA/D family. PSII is composed of 1 copy each of membrane proteins PsbA, PsbB, PsbC, PsbD, PsbE, PsbF, PsbH, PsbI, PsbJ, PsbK, PsbL, PsbM, PsbT, PsbX, PsbY, Psb30/Ycf12, peripheral proteins PsbO, CyanoQ (PsbQ), PsbU, PsbV and a large number of cofactors. It forms dimeric complexes. The D1/D2 heterodimer binds P680, chlorophylls that are the primary electron donor of PSII, and subsequent electron acceptors. It shares a non-heme iron and each subunit binds pheophytin, quinone, additional chlorophylls, carotenoids and lipids. D1 provides most of the ligands for the Mn4-Ca-O5 cluster of the oxygen-evolving complex (OEC). There is also a Cl(-1) ion associated with D1 and D2, which is required for oxygen evolution. The PSII complex binds additional chlorophylls, carotenoids and specific lipids. is required as a cofactor. In terms of processing, tyr-162 forms a radical intermediate that is referred to as redox-active TyrZ, YZ or Y-Z. Post-translationally, C-terminally processed by CtpA; processing is essential to allow assembly of the oxygen-evolving complex and thus photosynthetic growth.

It localises to the cellular thylakoid membrane. It carries out the reaction 2 a plastoquinone + 4 hnu + 2 H2O = 2 a plastoquinol + O2. In terms of biological role, photosystem II (PSII) is a light-driven water:plastoquinone oxidoreductase that uses light energy to abstract electrons from H(2)O, generating O(2) and a proton gradient subsequently used for ATP formation. It consists of a core antenna complex that captures photons, and an electron transfer chain that converts photonic excitation into a charge separation. The D1/D2 (PsbA/PsbD) reaction center heterodimer binds P680, the primary electron donor of PSII as well as several subsequent electron acceptors. The chain is Photosystem II protein D1 from Prochlorococcus marinus (strain SARG / CCMP1375 / SS120).